The primary structure comprises 447 residues: Tubulin beta chain (447 aa).

GTP contacts are provided by Q11, E69, S138, G142, T143, G144, N204, and N226. E69 is a Mg(2+) binding site. The disordered stretch occupies residues 427–447 (DAGIDEEEEEYEEELPLEGEE). Over residues 429–447 (GIDEEEEEYEEELPLEGEE) the composition is skewed to acidic residues.

This sequence belongs to the tubulin family. Dimer of alpha and beta chains. A typical microtubule is a hollow water-filled tube with an outer diameter of 25 nm and an inner diameter of 15 nM. Alpha-beta heterodimers associate head-to-tail to form protofilaments running lengthwise along the microtubule wall with the beta-tubulin subunit facing the microtubule plus end conferring a structural polarity. Microtubules usually have 13 protofilaments but different protofilament numbers can be found in some organisms and specialized cells. Requires Mg(2+) as cofactor.

It localises to the cytoplasm. Its subcellular location is the cytoskeleton. Functionally, tubulin is the major constituent of microtubules, a cylinder consisting of laterally associated linear protofilaments composed of alpha- and beta-tubulin heterodimers. Microtubules grow by the addition of GTP-tubulin dimers to the microtubule end, where a stabilizing cap forms. Below the cap, tubulin dimers are in GDP-bound state, owing to GTPase activity of alpha-tubulin. The sequence is that of Tubulin beta chain (TUB2) from Hapsidospora chrysogena (Acremonium chrysogenum).